Here is a 301-residue protein sequence, read N- to C-terminus: Aquaporin NIP2-3 (301 aa).

2 consecutive transmembrane segments (helical) span residues 57-77 (VISEVVATFLLVFVTCGAASI) and 91-111 (SVAGGLIVTVMIYATGHISGA). The short motif at 114–116 (NPA) is the NPA 1 element. 3 helical membrane-spanning segments follow: residues 132–154 (VPFYWAAQFTGAMCAAFVLKAVL), 172–192 (ALAIEIVVTFNMMFVTCAVAT), and 200–220 (LAGLAVGSAVCITSIFAGPVS). Positions 225 to 227 (NPA) match the NPA 2 motif. The chain crosses the membrane as a helical span at residues 238–258 (VFTGLWIYFLGPVVGTLSGAW).

The protein belongs to the MIP/aquaporin (TC 1.A.8) family. NIP (TC 1.A.8.12) subfamily.

It is found in the membrane. Functionally, aquaporins facilitate the transport of water and small neutral solutes across cell membranes. This chain is Aquaporin NIP2-3 (NIP2-3), found in Zea mays (Maize).